Reading from the N-terminus, the 704-residue chain is DNA ligase (704 aa).

Residues 58 to 62, 107 to 108, and glutamate 138 contribute to the NAD(+) site; these read DYEYD and SL. Lysine 140 (N6-AMP-lysine intermediate) is an active-site residue. Positions 161, 199, 323, and 347 each coordinate NAD(+). Zn(2+)-binding residues include cysteine 441, cysteine 444, cysteine 459, and cysteine 464. Residues 621–704 enclose the BRCT domain; the sequence is EKKGKLAGLN…LKLIGGENTE (84 aa).

The protein belongs to the NAD-dependent DNA ligase family. LigA subfamily. Requires Mg(2+) as cofactor. Mn(2+) serves as cofactor.

The enzyme catalyses NAD(+) + (deoxyribonucleotide)n-3'-hydroxyl + 5'-phospho-(deoxyribonucleotide)m = (deoxyribonucleotide)n+m + AMP + beta-nicotinamide D-nucleotide.. Its function is as follows. DNA ligase that catalyzes the formation of phosphodiester linkages between 5'-phosphoryl and 3'-hydroxyl groups in double-stranded DNA using NAD as a coenzyme and as the energy source for the reaction. It is essential for DNA replication and repair of damaged DNA. The protein is DNA ligase of Sulfurihydrogenibium sp. (strain YO3AOP1).